The following is a 101-amino-acid chain: ATP synthase subunit f, mitochondrial (101 aa).

The transit peptide at Met1–Ala6 directs the protein to the mitochondrion.

It belongs to the ATPase F chain family. As to quaternary structure, F-type ATPases have 2 components, CF(1) - the catalytic core - and CF(0) - the membrane proton channel. In yeast, the dimeric form of ATP synthase consists of 17 polypeptides: alpha, beta, gamma, delta, epsilon, 4 (B), 5 (OSCP), 6 (A), 8, 9 (C), d, E (Tim11), f, g, h, i/j and k.

It localises to the mitochondrion. It is found in the mitochondrion inner membrane. Functionally, mitochondrial membrane ATP synthase (F(1)F(0) ATP synthase or Complex V) produces ATP from ADP in the presence of a proton gradient across the membrane which is generated by electron transport complexes of the respiratory chain. F-type ATPases consist of two structural domains, F(1) - containing the extramembraneous catalytic core and F(0) - containing the membrane proton channel, linked together by a central stalk and a peripheral stalk. During catalysis, ATP synthesis in the catalytic domain of F(1) is coupled via a rotary mechanism of the central stalk subunits to proton translocation. Part of the complex F(0) domain. Minor subunit located with subunit a in the membrane. This chain is ATP synthase subunit f, mitochondrial (ATP17), found in Saccharomyces cerevisiae (strain ATCC 204508 / S288c) (Baker's yeast).